The following is a 703-amino-acid chain: Probable boron transporter 2 (703 aa).

Residues 1–35 (MEETFVPFEGIKNDLKGRLMCYKQDWTGGIKAGFR) are Cytoplasmic-facing. The helical transmembrane segment at 36–56 (ILAPTTYIFFASAIPVISFGE) threads the bilayer. The Extracellular segment spans residues 57 to 75 (QLERSTDGVLTAVQTLAST). The chain crosses the membrane as a helical span at residues 76-96 (AICGIIHSIIGGQPLLILGVA). At 97–120 (EPTVIMYTFMFNFAKGRPELGRNL) the chain is on the cytoplasmic side. A helical membrane pass occupies residues 121 to 141 (FLAWSGWVCVWTSLILFVLAI). Residues 142-155 (CGACSFINRFTRVA) lie on the Extracellular side of the membrane. Residues 156–176 (GELFGLLIAMLFMQQAIKGLV) traverse the membrane as a helical segment. The Cytoplasmic portion of the chain corresponds to 177–195 (DEFRAPAREDLKLVEFLPS). The chain crosses the membrane as a helical span at residues 196 to 216 (WRFANGMFALVLSFGLLITAL). The Extracellular segment spans residues 217–233 (RSRKARSWRYGTGWLRS). The helical transmembrane segment at 234–254 (LVADYGVPLMVLVWTGVSYIP) threads the bilayer. Topologically, residues 255–289 (TGDVPKGIPRRLFSPNPWSPGAYENWTVVKEMLQV) are cytoplasmic. Residues 290–310 (PIVYIIGAFIPATMIAVLYYF) traverse the membrane as a helical segment. Over 311 to 337 (DHSVASQLAQQKEFNLRKPSSYHYDLL) the chain is Extracellular. Residues 338 to 358 (LLGFLTLMCGLLGIPPSNGVI) traverse the membrane as a helical segment. Residues 359 to 480 (PQSPMHTKSL…AVMVGGCVAA (122 aa)) lie on the Cytoplasmic side of the membrane. The chain crosses the membrane as a helical span at residues 481–501 (MPLLKMIPTSVLWGYFAFMAI). The Extracellular portion of the chain corresponds to 502 to 557 (ESLPGNQFWERILLLFTAPSRRFKVLEDNHATFVETVPFKTIAMFTIFQTTYLLTC). The helical transmembrane segment at 558–578 (FGLTWIPIAGVMFPLLIMFLI) threads the bilayer. The Cytoplasmic portion of the chain corresponds to 579 to 703 (PVRQYILPRF…SPLNPSSSSK (125 aa)). A disordered region spans residues 678–703 (EMSPRLSGKGQNSPKPSPLNPSSSSK).

It belongs to the anion exchanger (TC 2.A.31.3) family.

Its subcellular location is the membrane. In terms of biological role, probable boron transporter. Boron is essential for maintaining the integrity of plants cell walls. In Arabidopsis thaliana (Mouse-ear cress), this protein is Probable boron transporter 2 (BOR2).